Consider the following 449-residue polypeptide: Ras-related GTP-binding protein D (449 aa).

The tract at residues 1–55 (MSQVLGKPQPQGEDGGEDQEEDELVGLAGYEDGPESSDAELDSGPEEGESRRNSW) is disordered. Composition is skewed to acidic residues over residues 14 to 24 (DGGEDQEEDEL) and 32 to 47 (DGPE…GPEE). The GTP site is built by R120, R121, S122, G123, K124, S125, S126, and T140. Residues R121, S122, G123, K124, S125, S126, T140, E144, and T146 each contribute to the GDP site. GTP is bound by residues T146, G169, H228, K229, and D231. 5 residues coordinate GDP: H228, K229, D231, S269, and I270. Residue I270 coordinates GTP. The disordered stretch occupies residues 428-449 (KAQSRLPKKTGATPNGTPRVLL).

This sequence belongs to the GTR/RAG GTP-binding protein family. In terms of assembly, forms a heterodimer with RRAGA in a sequence-independent manner and RRAGB. Heterodimerization stabilizes RRAG proteins. The GDP-bound form of RRAGD (in complex with the GTP-bound form of RRAGA or RRAGB), interacts with RPTOR, thereby promoting recruitment of mTORC1 to the lysosomes. Component of the lysosomal folliculin complex (LFC), composed of FLCN, FNIP1 (or FNIP2), RagA/RRAGA or RagB/RRAGB GDP-bound, RagC/RRAGC or RagD/RRAGD GTP-bound, and Ragulator. Interacts with NOL8. Interacts with SH3BP4; the interaction with this negative regulator is most probably direct, preferentially occurs with the inactive GDP-bound form of RRAGD and is negatively regulated by amino acids. The Rag heterodimer interacts with SLC38A9; the probable amino acid sensor. Interacts with SESN1, SESN2 and SESN3. The GDP-bound form interacts with TFEB. The GDP-bound form interacts with TFE3. In terms of tissue distribution, expressed in the distal tubule of the kidney.

It localises to the cytoplasm. Its subcellular location is the nucleus. The protein localises to the lysosome membrane. It catalyses the reaction GTP + H2O = GDP + phosphate + H(+). The activation of RagD/RRAGD is mediated by a GTPase activating protein (GAP). In high-amino acid conditions, activated by GTPase activating protein FLCN that stimulates RRAGD GTPase activity to turn it into its active GDP-bound form. In response to amino acid depletion, the GATOR1 complex inactivates RagC/RRAGC by securing the GTP-bound inactive form. Functionally, guanine nucleotide-binding protein that plays a crucial role in the cellular response to amino acid availability through regulation of the mTORC1 signaling cascade. Forms heterodimeric Rag complexes with RagA/RRAGA or RagB/RRAGB and cycles between an inactive GTP-bound and an active GDP-bound form: RagD/RRAGD is in its active form when GDP-bound RagD/RRAGD forms a complex with GTP-bound RagA/RRAGA (or RagB/RRAGB) and in an inactive form when GTP-bound RagD/RRAGD heterodimerizes with GDP-bound RagA/RRAGA (or RagB/RRAGB). In its active form, promotes the recruitment of mTORC1 to the lysosomes and its subsequent activation by the GTPase RHEB. This is a crucial step in the activation of the MTOR signaling cascade by amino acids. Also plays a central role in the non-canonical mTORC1 complex, which acts independently of RHEB and specifically mediates phosphorylation of MiT/TFE factors TFEB and TFE3: GDP-bound RagD/RRAGD mediates recruitment of MiT/TFE factors TFEB and TFE3. This is Ras-related GTP-binding protein D from Mus musculus (Mouse).